A 290-amino-acid polypeptide reads, in one-letter code: Acetyl-coenzyme A carboxylase carboxyl transferase subunit beta (290 aa).

A CoA carboxyltransferase N-terminal domain is found at 28-290; it reads IMTKCPKCKK…TGGEYEWLQD (263 aa). Zn(2+) contacts are provided by Cys-32, Cys-35, Cys-51, and Cys-54. The C4-type zinc-finger motif lies at 32-54; that stretch reads CPKCKKIMLTKELDKNLRVCMNC.

It belongs to the AccD/PCCB family. Acetyl-CoA carboxylase is a heterohexamer composed of biotin carboxyl carrier protein (AccB), biotin carboxylase (AccC) and two subunits each of ACCase subunit alpha (AccA) and ACCase subunit beta (AccD). Requires Zn(2+) as cofactor.

It localises to the cytoplasm. The enzyme catalyses N(6)-carboxybiotinyl-L-lysyl-[protein] + acetyl-CoA = N(6)-biotinyl-L-lysyl-[protein] + malonyl-CoA. It functions in the pathway lipid metabolism; malonyl-CoA biosynthesis; malonyl-CoA from acetyl-CoA: step 1/1. Its function is as follows. Component of the acetyl coenzyme A carboxylase (ACC) complex. Biotin carboxylase (BC) catalyzes the carboxylation of biotin on its carrier protein (BCCP) and then the CO(2) group is transferred by the transcarboxylase to acetyl-CoA to form malonyl-CoA. In Bacillus velezensis (strain DSM 23117 / BGSC 10A6 / LMG 26770 / FZB42) (Bacillus amyloliquefaciens subsp. plantarum), this protein is Acetyl-coenzyme A carboxylase carboxyl transferase subunit beta.